The following is a 55-amino-acid chain: ATP synthase protein 8 (55 aa).

Residues 11 to 31 traverse the membrane as a helical segment; the sequence is LIMFSVTLMLLIVLVINHFML.

This sequence belongs to the ATPase protein 8 family. F-type ATPases have 2 components, CF(1) - the catalytic core - and CF(0) - the membrane proton channel.

It localises to the mitochondrion membrane. Mitochondrial membrane ATP synthase (F(1)F(0) ATP synthase or Complex V) produces ATP from ADP in the presence of a proton gradient across the membrane which is generated by electron transport complexes of the respiratory chain. F-type ATPases consist of two structural domains, F(1) - containing the extramembraneous catalytic core and F(0) - containing the membrane proton channel, linked together by a central stalk and a peripheral stalk. During catalysis, ATP synthesis in the catalytic domain of F(1) is coupled via a rotary mechanism of the central stalk subunits to proton translocation. Part of the complex F(0) domain. Minor subunit located with subunit a in the membrane. This is ATP synthase protein 8 (MT-ATP8) from Albinaria caerulea (Land snail).